A 219-amino-acid chain; its full sequence is Proteasome subunit beta type-9 (219 aa).

Positions M1–G20 are cleaved as a propeptide — removed in mature form. The active-site Nucleophile is the T21. N6-acetyllysine occurs at positions 53 and 109.

It belongs to the peptidase T1B family. As to quaternary structure, the 26S proteasome consists of a 20S proteasome core and two 19S regulatory subunits. The 20S proteasome core is composed of 28 subunits that are arranged in four stacked rings, resulting in a barrel-shaped structure. The two end rings are each formed by seven alpha subunits, and the two central rings are each formed by seven beta subunits. The catalytic chamber with the active sites is on the inside of the barrel. Component of the immunoproteasome, where it displaces the equivalent housekeeping subunit PSMB6. Component of the spermatoproteasome, a form of the proteasome specifically found in testis. Autocleaved. The resulting N-terminal Thr residue of the mature subunit is responsible for the nucleophile proteolytic activity.

It localises to the cytoplasm. Its subcellular location is the nucleus. The catalysed reaction is Cleavage of peptide bonds with very broad specificity.. Its function is as follows. The proteasome is a multicatalytic proteinase complex which is characterized by its ability to cleave peptides with Arg, Phe, Tyr, Leu, and Glu adjacent to the leaving group at neutral or slightly basic pH. The proteasome has an ATP-dependent proteolytic activity. This subunit is involved in antigen processing to generate class I binding peptides. The polypeptide is Proteasome subunit beta type-9 (Psmb9) (Mus spicilegus (Steppe mouse)).